Consider the following 1205-residue polypeptide: U2 snRNP component prp10 (1205 aa).

Disordered stretches follow at residues 39 to 58 (QKEAAKNSSTNGSVNIEGTQ), 122 to 175 (YADE…GRSY), and 202 to 254 (GTLK…RRSR). Residues 44-58 (KNSSTNGSVNIEGTQ) are compositionally biased toward polar residues. The segment covering 130–153 (MQERQSKKQIQDRESDYQKQRYDR) has biased composition (basic and acidic residues). HEAT repeat units follow at residues 393–429 (LRERKILRLLLKVKNGTPPMRKSALRQLTDQARDFGA), 431–473 (ALFN…PFTH), 475–505 (ILVVIEPLLIDEDYYARAEGREIISNLAKAS), 506–540 (GLAHMIATMRPDIDHVDEYVRNTTARAFSVVASAL), 541–578 (GVPALLPFLKAVCRSKKSWQARHTGVRIIQQIALLLGC), 582–619 (PHLKNLVDCIGHGLEDEQQKVRIMTALSLSALAEAATP), 665–702 (HFTRRIMKILLREFNSPDEEMKKIVLKVVSQCASTDGV), 745–782 (VGSRQIVERVVNNFKDESEPYRKMTAETVDKVIGSLGV), 828–865 (PYLPQIVSTILYRLNNKSANVREQAADLVSSITIVLKA), 912–949 (PPIRDLLPRLTPILRNRHEKVQENTIDLVGKIADRGSE), 954–991 (REWMRICFELIDMLKAHKKSIRRAAVNTFGYISKAIGP), 993–1024 (DVLATLLNNLKVQERQNRVCTTVAIAIVAETC), 1025–1061 (MPFTVVPALMADYRTPEMNVQNGVLKSLAFMFEYIGE), 1065–1102 (DYVYAITPLLADALMDRDAVHRQTAASVIKHLSLGCVG), 1107–1142 (DAMIHLLNILWPNILEESPHVINAVREGIDGIRNCI), and 1143–1179 (GVGPIMAYLVQGLFHPSRKVRNTYWTSYNSAYVQSAD).

Belongs to the SF3B1 family. Belongs to the 40S cdc5-associated complex (or cwf complex), a spliceosome sub-complex reminiscent of a late-stage spliceosome composed of the U2, U5 and U6 snRNAs and at least brr2, cdc5, cwf2/prp3, cwf3/syf1, cwf4/syf3, cwf5/ecm2, spp42/cwf6, cwf7/spf27, cwf8, cwf9, cwf10, cwf11, cwf12, prp45/cwf13, cwf14, cwf15, cwf16, cwf17, cwf18, cwf19, cwf20, cwf21, cwf22, cwf23, cwf24, cwf25, cwf26, cyp7/cwf27, cwf28, cwf29/ist3, lea1, msl1, prp5/cwf1, prp10, prp12/sap130, prp17, prp22, sap61, sap62, sap114, sap145, slu7, smb1, smd1, smd3, smf1, smg1 and syf2.

It is found in the nucleus. Contacts pre-mRNA on both sides of the branch site early in spliceosome assembly. This chain is U2 snRNP component prp10 (prp10), found in Schizosaccharomyces pombe (strain 972 / ATCC 24843) (Fission yeast).